A 430-amino-acid polypeptide reads, in one-letter code: MEFVLESISPTKKKLTISLTPDEVNTALDSVIAQYKKDLSLPGFRKGKVPNSVVFKKFSEEITNKATEETLKIYIKEIFQKEHIKPLCNLLTEDTDFIRNESFSSTLTFEVLPEITFPNYEGLEVHQDVVKVTDEEVAELLKNIQLAMAELVDVKEDRSPQNGDVVDVDYKGFENGSPVTDVSGEHFVLTLGQRQALEDFEQLVKTAKVGEEKVGIVNFPRDYAHKGLAGKSIDFHIKLNSIKTSILPELDADFAKKAGYEDIDKLREAAKVQLEIKKKQNAKSNAMKKLINGLLEQVTFDVPETMLETRIERILGDHNIRSQQTVQVQTGEERSESEEELYNNAKVEALAVLRPQIFLMALAEKEKLVVMEQEVERALYNMAIRARQDYNKFRDAYYRSGLVYELQDHLLAEKAMELIYNKANVVEVEQ.

In terms of domain architecture, PPIase FKBP-type spans 163-248 (GDVVDVDYKG…LNSIKTSILP (86 aa)).

Belongs to the FKBP-type PPIase family. Tig subfamily.

It localises to the cytoplasm. It catalyses the reaction [protein]-peptidylproline (omega=180) = [protein]-peptidylproline (omega=0). Its function is as follows. Involved in protein export. Acts as a chaperone by maintaining the newly synthesized protein in an open conformation. Functions as a peptidyl-prolyl cis-trans isomerase. The sequence is that of Trigger factor from Lawsonia intracellularis (strain PHE/MN1-00).